The following is a 222-amino-acid chain: Phosphoribosylformylglycinamidine synthase subunit PurQ (222 aa).

A Glutamine amidotransferase type-1 domain is found at 3 to 222; the sequence is AAVVVFPGSN…RALSGLLTDA (220 aa). The active-site Nucleophile is cysteine 86. Residues histidine 194 and glutamate 196 contribute to the active site.

As to quaternary structure, part of the FGAM synthase complex composed of 1 PurL, 1 PurQ and 2 PurS subunits.

The protein resides in the cytoplasm. It carries out the reaction N(2)-formyl-N(1)-(5-phospho-beta-D-ribosyl)glycinamide + L-glutamine + ATP + H2O = 2-formamido-N(1)-(5-O-phospho-beta-D-ribosyl)acetamidine + L-glutamate + ADP + phosphate + H(+). The catalysed reaction is L-glutamine + H2O = L-glutamate + NH4(+). The protein operates within purine metabolism; IMP biosynthesis via de novo pathway; 5-amino-1-(5-phospho-D-ribosyl)imidazole from N(2)-formyl-N(1)-(5-phospho-D-ribosyl)glycinamide: step 1/2. Its function is as follows. Part of the phosphoribosylformylglycinamidine synthase complex involved in the purines biosynthetic pathway. Catalyzes the ATP-dependent conversion of formylglycinamide ribonucleotide (FGAR) and glutamine to yield formylglycinamidine ribonucleotide (FGAM) and glutamate. The FGAM synthase complex is composed of three subunits. PurQ produces an ammonia molecule by converting glutamine to glutamate. PurL transfers the ammonia molecule to FGAR to form FGAM in an ATP-dependent manner. PurS interacts with PurQ and PurL and is thought to assist in the transfer of the ammonia molecule from PurQ to PurL. In Ruegeria sp. (strain TM1040) (Silicibacter sp.), this protein is Phosphoribosylformylglycinamidine synthase subunit PurQ.